A 79-amino-acid polypeptide reads, in one-letter code: NADH-ubiquinone oxidoreductase chain 4 (79 aa).

2 consecutive transmembrane segments (helical) span residues 24–44 (SYTLMIAHGLCSSGLFCLANI) and 54–74 (LLINKGLLNFMPSLSLWWFLL).

The protein belongs to the complex I subunit 4 family.

Its subcellular location is the mitochondrion membrane. The catalysed reaction is a ubiquinone + NADH + 5 H(+)(in) = a ubiquinol + NAD(+) + 4 H(+)(out). Its function is as follows. Core subunit of the mitochondrial membrane respiratory chain NADH dehydrogenase (Complex I) that is believed to belong to the minimal assembly required for catalysis. Complex I functions in the transfer of electrons from NADH to the respiratory chain. The immediate electron acceptor for the enzyme is believed to be ubiquinone. The protein is NADH-ubiquinone oxidoreductase chain 4 (ND4) of Simulium vittatum (Striped black fly).